The following is a 524-amino-acid chain: Acetyl-CoA hydrolase (524 aa).

279-283 (GIGNI) serves as a coordination point for CoA. E304 (5-glutamyl coenzyme A thioester intermediate) is an active-site residue. G398 lines the CoA pocket.

The protein belongs to the acetyl-CoA hydrolase/transferase family.

Its subcellular location is the cytoplasm. It catalyses the reaction acetyl-CoA + H2O = acetate + CoA + H(+). In terms of biological role, presumably involved in regulating the intracellular acetyl-CoA pool for fatty acid and cholesterol synthesis and fatty acid oxidation. The protein is Acetyl-CoA hydrolase (ACH1) of Yarrowia lipolytica (strain CLIB 122 / E 150) (Yeast).